The sequence spans 360 residues: Glutamine synthetase (360 aa).

The 80-residue stretch at 26-105 (IMAEYIWIDA…VLSECWNADG (80 aa)) folds into the GS beta-grasp domain. Residues 112 to 360 (YRHECAKLME…METIYGSVDN (249 aa)) form the GS catalytic domain.

This sequence belongs to the glutamine synthetase family. Homooctamer.

The protein resides in the cytoplasm. The catalysed reaction is L-glutamate + NH4(+) + ATP = L-glutamine + ADP + phosphate + H(+). In Colletotrichum gloeosporioides (Anthracnose fungus), this protein is Glutamine synthetase (GLN1).